The chain runs to 440 residues: Thymidine phosphorylase (440 aa).

The protein belongs to the thymidine/pyrimidine-nucleoside phosphorylase family. Homodimer.

It carries out the reaction thymidine + phosphate = 2-deoxy-alpha-D-ribose 1-phosphate + thymine. The protein operates within pyrimidine metabolism; dTMP biosynthesis via salvage pathway; dTMP from thymine: step 1/2. Its function is as follows. The enzymes which catalyze the reversible phosphorolysis of pyrimidine nucleosides are involved in the degradation of these compounds and in their utilization as carbon and energy sources, or in the rescue of pyrimidine bases for nucleotide synthesis. In Burkholderia pseudomallei (strain 1106a), this protein is Thymidine phosphorylase.